A 276-amino-acid chain; its full sequence is Undecaprenyl-diphosphatase 2 (276 aa).

The next 8 helical transmembrane spans lie at 1–21 (MSLW…LFPV), 44–64 (QLLP…LWYF), 87–107 (GHLM…GLLL), 114–134 (VFHD…LLWL), 150–170 (MTFK…IPGF), 190–210 (AAEF…VLEL), 222–242 (DALL…RFLM), and 251–271 (LASF…WFML).

It belongs to the UppP family.

It is found in the cell inner membrane. It catalyses the reaction di-trans,octa-cis-undecaprenyl diphosphate + H2O = di-trans,octa-cis-undecaprenyl phosphate + phosphate + H(+). Its function is as follows. Catalyzes the dephosphorylation of undecaprenyl diphosphate (UPP). Confers resistance to bacitracin. The polypeptide is Undecaprenyl-diphosphatase 2 (Burkholderia lata (strain ATCC 17760 / DSM 23089 / LMG 22485 / NCIMB 9086 / R18194 / 383)).